The sequence spans 186 residues: Oligoribonuclease (186 aa).

The Exonuclease domain maps to 12–175 (LIWIDLEMTG…DDIKDSIKEL (164 aa)). Residue Tyr-133 is part of the active site.

Belongs to the oligoribonuclease family.

The protein localises to the cytoplasm. 3'-to-5' exoribonuclease specific for small oligoribonucleotides. The polypeptide is Oligoribonuclease (Wigglesworthia glossinidia brevipalpis).